Reading from the N-terminus, the 301-residue chain is ATP synthase gamma chain (301 aa).

Belongs to the ATPase gamma chain family. In terms of assembly, F-type ATPases have 2 components, CF(1) - the catalytic core - and CF(0) - the membrane proton channel. CF(1) has five subunits: alpha(3), beta(3), gamma(1), delta(1), epsilon(1). CF(0) has three main subunits: a, b and c.

The protein resides in the cell inner membrane. Its function is as follows. Produces ATP from ADP in the presence of a proton gradient across the membrane. The gamma chain is believed to be important in regulating ATPase activity and the flow of protons through the CF(0) complex. The polypeptide is ATP synthase gamma chain (Helicobacter pylori (strain J99 / ATCC 700824) (Campylobacter pylori J99)).